A 464-amino-acid chain; its full sequence is ATP synthase subunit beta (464 aa).

152–159 (GGAGVGKT) provides a ligand contact to ATP.

It belongs to the ATPase alpha/beta chains family. As to quaternary structure, F-type ATPases have 2 components, CF(1) - the catalytic core - and CF(0) - the membrane proton channel. CF(1) has five subunits: alpha(3), beta(3), gamma(1), delta(1), epsilon(1). CF(0) has three main subunits: a(1), b(2) and c(9-12). The alpha and beta chains form an alternating ring which encloses part of the gamma chain. CF(1) is attached to CF(0) by a central stalk formed by the gamma and epsilon chains, while a peripheral stalk is formed by the delta and b chains.

The protein localises to the cell inner membrane. It catalyses the reaction ATP + H2O + 4 H(+)(in) = ADP + phosphate + 5 H(+)(out). Functionally, produces ATP from ADP in the presence of a proton gradient across the membrane. The catalytic sites are hosted primarily by the beta subunits. This chain is ATP synthase subunit beta, found in Aliarcobacter butzleri (strain RM4018) (Arcobacter butzleri).